The following is a 733-amino-acid chain: DNA repair and recombination protein RAD54-like (733 aa).

The tract at residues 1–35 (LAKRKAGGEEEDGEWRPPATQKRQKAGSEAESADC) is disordered. One can recognise a Helicase ATP-binding domain in the interval 159–334 (SRRIPGSHGC…FSLVHFVNSG (176 aa)). 172 to 179 (DEMGLGKT) provides a ligand contact to ATP. The DEGH box signature appears at 285–288 (DEGH). A Helicase C-terminal domain is found at 488 to 642 (LVLDYILAVT…CVVDEEQDVE (155 aa)). Lys-504 is modified (N6-acetyllysine). Position 561 is a phosphoserine; by NEK1 (Ser-561).

It belongs to the SNF2/RAD54 helicase family. In terms of assembly, homohexamer. Interacts (via N-terminus) with RAD51. Interacts with NAP1L1. Interacts with BRD9; this interaction orchestrates RAD51-RAD54 complex formation. In terms of processing, acetylated. Acetylation promotes interaction with BRD9, and subsequently with RAD54, which is essential for homologous recombination (HR). Post-translationally, phosphorylated. Phosphorylation at Ser-561 by NEK1 specifically in G2 phase allows efficient removal of RAD51 filaments from DNA. Highly expressed in bursa, thymus, testis, and ovary. Low level of expression seen in all other organs tested.

The protein resides in the nucleus. Plays an essential role in homologous recombination (HR) which is a major pathway for repairing DNA double-strand breaks (DSBs), single-stranded DNA (ssDNA) gaps, and stalled or collapsed replication forks. Acts as a molecular motor during the homology search and guides RAD51 ssDNA along a donor dsDNA thereby changing the homology search from the diffusion-based mechanism to a motor-guided mechanism. Plays also an essential role in RAD51-mediated synaptic complex formation which consists of three strands encased in a protein filament formed once homology is recognized. Once DNA strand exchange occured, dissociates RAD51 from nucleoprotein filaments formed on dsDNA. The polypeptide is DNA repair and recombination protein RAD54-like (RAD54L) (Gallus gallus (Chicken)).